Consider the following 492-residue polypeptide: Regulatory protein ViaA (492 aa).

The protein belongs to the ViaA family. In terms of assembly, homodimer. Interacts with RavA.

Its subcellular location is the cytoplasm. Component of the RavA-ViaA chaperone complex, which may act on the membrane to optimize the function of some of the respiratory chains. ViaA stimulates the ATPase activity of RavA. This is Regulatory protein ViaA from Pectobacterium atrosepticum (strain SCRI 1043 / ATCC BAA-672) (Erwinia carotovora subsp. atroseptica).